Reading from the N-terminus, the 362-residue chain is Phosphoserine aminotransferase (362 aa).

The L-glutamate site is built by S9 and R42. Pyridoxal 5'-phosphate is bound by residues 76-77, W102, T153, D174, and Q197; that span reads GR. K198 is modified (N6-(pyridoxal phosphate)lysine). Residue 239 to 240 participates in pyridoxal 5'-phosphate binding; sequence NT.

The protein belongs to the class-V pyridoxal-phosphate-dependent aminotransferase family. SerC subfamily. As to quaternary structure, homodimer. Requires pyridoxal 5'-phosphate as cofactor.

The protein localises to the cytoplasm. It catalyses the reaction O-phospho-L-serine + 2-oxoglutarate = 3-phosphooxypyruvate + L-glutamate. It carries out the reaction 4-(phosphooxy)-L-threonine + 2-oxoglutarate = (R)-3-hydroxy-2-oxo-4-phosphooxybutanoate + L-glutamate. It functions in the pathway amino-acid biosynthesis; L-serine biosynthesis; L-serine from 3-phospho-D-glycerate: step 2/3. It participates in cofactor biosynthesis; pyridoxine 5'-phosphate biosynthesis; pyridoxine 5'-phosphate from D-erythrose 4-phosphate: step 3/5. Functionally, catalyzes the reversible conversion of 3-phosphohydroxypyruvate to phosphoserine and of 3-hydroxy-2-oxo-4-phosphonooxybutanoate to phosphohydroxythreonine. This Shigella dysenteriae serotype 1 (strain Sd197) protein is Phosphoserine aminotransferase.